A 589-amino-acid polypeptide reads, in one-letter code: Leucine-rich repeat and immunoglobulin-like domain-containing nogo receptor-interacting protein 3 (589 aa).

Residues 1–23 form the signal peptide; the sequence is MTCWLHMLGLHLLLLPTAPLAAG. The region spanning 24–53 is the LRRNT domain; it reads CPARCECSASTRTVACGRRRLTAIPEGIPA. At 24-528 the chain is on the extracellular side; the sequence is CPARCECSAS…LDLTTILVST (505 aa). LRR repeat units lie at residues 54 to 75, 78 to 99, 102 to 123, 126 to 147, 150 to 171, 174 to 195, 206 to 227, 246 to 267, 270 to 291, 294 to 315, and 318 to 339; these read ETRM…DLAS, TLEE…AFAN, RLRV…VFTH, SLTL…SFQD, SLQR…AFAG, GLAE…SLGH, HLAI…SHLE, NLTS…ALRQ, HLTC…SFRD, RLRE…AFVG, and QIRL…TFHS. A glycan (N-linked (GlcNAc...) asparagine) is linked at Asn-184. Asn-246, Asn-256, and Asn-275 each carry an N-linked (GlcNAc...) asparagine glycan. Asn-323 is a glycosylation site (N-linked (GlcNAc...) asparagine). The 55-residue stretch at 351–405 folds into the LRRCT domain; sequence NPLACDCRLLWIVQRRKTLNFDGRLPACATPAEVRGDALHNLPDSVLFEYFVCRK. An Ig-like C2-type domain is found at 406–495; it reads PKIRERRLQH…GNDTYFATLT (90 aa). Cys-428 and Cys-479 form a disulfide bridge. N-linked (GlcNAc...) asparagine glycosylation is found at Asn-487, Asn-501, and Asn-509. A helical transmembrane segment spans residues 529–549; sequence AMGCITFLGVVLFCFLLLFVW. Over 550–589 the chain is Cytoplasmic; the sequence is SRGRGQHKNNFSVEYSFRKVDGPAAAAGQGGARKFNMKMI.

It is found in the membrane. The protein is Leucine-rich repeat and immunoglobulin-like domain-containing nogo receptor-interacting protein 3 (Lingo3) of Mus musculus (Mouse).